We begin with the raw amino-acid sequence, 255 residues long: Type III pantothenate kinase (255 aa).

12 to 19 (DIGNSYTK) contributes to the ATP binding site. Substrate is bound at residue 109 to 112 (GDDL). The Proton acceptor role is filled by Asp-111. ATP is bound at residue Thr-133. Thr-185 contacts substrate.

It belongs to the type III pantothenate kinase family. Homodimer. It depends on NH4(+) as a cofactor. Requires K(+) as cofactor.

It localises to the cytoplasm. The catalysed reaction is (R)-pantothenate + ATP = (R)-4'-phosphopantothenate + ADP + H(+). It functions in the pathway cofactor biosynthesis; coenzyme A biosynthesis; CoA from (R)-pantothenate: step 1/5. Functionally, catalyzes the phosphorylation of pantothenate (Pan), the first step in CoA biosynthesis. This Malacoplasma penetrans (strain HF-2) (Mycoplasma penetrans) protein is Type III pantothenate kinase.